The following is a 348-amino-acid chain: Peroxidase 40 (348 aa).

An N-terminal signal peptide occupies residues 1-21 (MKNLFNLFLMFFFAMPILSLS). An N-linked (GlcNAc...) asparagine glycan is attached at Asn26. Disulfide bonds link Cys59–Cys139, Cys92–Cys97, Cys145–Cys344, and Cys224–Cys256. The active-site Proton acceptor is the His90. Residues Asp91, Val94, Gly96, Asp98, and Ser100 each contribute to the Ca(2+) site. Residues 170-189 (GRKDSRTASKQAATNGLPSP) form a disordered region. Residues 177 to 189 (ASKQAATNGLPSP) show a composition bias toward polar residues. Substrate is bound at residue Pro187. Asn190 carries an N-linked (GlcNAc...) asparagine glycan. Residue His217 participates in heme b binding. Thr218 is a binding site for Ca(2+). Ca(2+) contacts are provided by Asp269, Thr272, and Asp277.

The protein belongs to the peroxidase family. Classical plant (class III) peroxidase subfamily. Heme b serves as cofactor. The cofactor is Ca(2+).

Its subcellular location is the secreted. It catalyses the reaction 2 a phenolic donor + H2O2 = 2 a phenolic radical donor + 2 H2O. Functionally, removal of H(2)O(2), oxidation of toxic reductants, biosynthesis and degradation of lignin, suberization, auxin catabolism, response to environmental stresses such as wounding, pathogen attack and oxidative stress. These functions might be dependent on each isozyme/isoform in each plant tissue. The chain is Peroxidase 40 (PER40) from Arabidopsis thaliana (Mouse-ear cress).